Consider the following 748-residue polypeptide: Choline O-acetyltransferase (748 aa).

The segment covering 1 to 10 (MGLRTAKKRG) has biased composition (basic residues). Residues 1–89 (MGLRTAKKRG…EWCGAASAEA (89 aa)) are disordered. Residues 17–32 (WKREEGGGTRGRREVR) show a composition bias toward basic and acidic residues. Gly residues predominate over residues 40 to 53 (GGRGDPGDVGGPAG). Low complexity-rich tracts occupy residues 54–65 (NPGCSPHPRAAT) and 73–89 (HTPA…SAEA). The residue at position 125 (serine 125) is a Phosphoserine. Histidine 442 serves as the catalytic Proton acceptor. A Phosphoserine modification is found at serine 473. Residues 520–532 (GKTF…CSPD), serine 558, and glutamine 659 each bind CoA. Residues 727 to 748 (PTESKPLATKEKATRPSQGHQP) are disordered.

This sequence belongs to the carnitine/choline acetyltransferase family.

The enzyme catalyses choline + acetyl-CoA = acetylcholine + CoA. Functionally, catalyzes the reversible synthesis of acetylcholine (ACh) from acetyl CoA and choline at cholinergic synapses. The sequence is that of Choline O-acetyltransferase (CHAT) from Homo sapiens (Human).